The primary structure comprises 322 residues: HPr kinase/phosphorylase (322 aa).

Residues H146 and K167 contribute to the active site. G161–S168 contacts ATP. Residue S168 participates in Mg(2+) binding. The active-site Proton acceptor; for phosphorylation activity. Proton donor; for dephosphorylation activity is D185. The tract at residues L209–D218 is important for the catalytic mechanism of both phosphorylation and dephosphorylation. Residue E210 coordinates Mg(2+). R250 is an active-site residue. Residues Q271–R276 are important for the catalytic mechanism of dephosphorylation.

This sequence belongs to the HPrK/P family. In terms of assembly, homohexamer. The cofactor is Mg(2+).

It catalyses the reaction [HPr protein]-L-serine + ATP = [HPr protein]-O-phospho-L-serine + ADP + H(+). The enzyme catalyses [HPr protein]-O-phospho-L-serine + phosphate + H(+) = [HPr protein]-L-serine + diphosphate. Catalyzes the ATP- as well as the pyrophosphate-dependent phosphorylation of a specific serine residue in HPr, a phosphocarrier protein of the phosphoenolpyruvate-dependent sugar phosphotransferase system (PTS). HprK/P also catalyzes the pyrophosphate-producing, inorganic phosphate-dependent dephosphorylation (phosphorolysis) of seryl-phosphorylated HPr (P-Ser-HPr). The chain is HPr kinase/phosphorylase from Burkholderia cenocepacia (strain HI2424).